Here is a 704-residue protein sequence, read N- to C-terminus: Elongation factor G 1 (704 aa).

In terms of domain architecture, tr-type G spans 8 to 291; sequence ERYRNIGISA…AVIDYLPSPA (284 aa). Residues 17 to 24, 88 to 92, and 142 to 145 contribute to the GTP site; these read AHIDAGKT, DTPGH, and NKMD.

This sequence belongs to the TRAFAC class translation factor GTPase superfamily. Classic translation factor GTPase family. EF-G/EF-2 subfamily.

It is found in the cytoplasm. In terms of biological role, catalyzes the GTP-dependent ribosomal translocation step during translation elongation. During this step, the ribosome changes from the pre-translocational (PRE) to the post-translocational (POST) state as the newly formed A-site-bound peptidyl-tRNA and P-site-bound deacylated tRNA move to the P and E sites, respectively. Catalyzes the coordinated movement of the two tRNA molecules, the mRNA and conformational changes in the ribosome. This Burkholderia mallei (strain ATCC 23344) protein is Elongation factor G 1.